A 370-amino-acid polypeptide reads, in one-letter code: Nodulation protein Z (370 aa).

The 315-residue stretch at 47-361 folds into the GT23 domain; that stretch reads SSNDRFVVSR…NDPGRLILIE (315 aa).

Belongs to the glycosyltransferase 23 family.

Functionally, fucosyltransferase which adds the fucose moiety of the nod factor on its terminal reducing N-acetylglucosamine end. Uses GDP-fucose as the donor group. The protein is Nodulation protein Z (nodZ) of Bradyrhizobium diazoefficiens (strain JCM 10833 / BCRC 13528 / IAM 13628 / NBRC 14792 / USDA 110).